The following is a 138-amino-acid chain: Thyrotropin subunit beta (138 aa).

The first 20 residues, 1–20 (MTAIFLMSVLFGLACGQAMS), serve as a signal peptide directing secretion. 6 disulfides stabilise this stretch: Cys22/Cys72, Cys36/Cys87, Cys39/Cys125, Cys47/Cys103, Cys51/Cys105, and Cys108/Cys115. Asn43 carries an N-linked (GlcNAc...) asparagine glycan. The propeptide occupies 133-138 (VVGLSI).

This sequence belongs to the glycoprotein hormones subunit beta family. Heterodimer of a common alpha chain and a unique beta chain which confers biological specificity to thyrotropin, lutropin, follitropin and gonadotropin.

It is found in the secreted. Indispensable for the control of thyroid structure and metabolism. The polypeptide is Thyrotropin subunit beta (TSHB) (Lama glama (Llama)).